The primary structure comprises 1758 residues: uncharacterized protein (1758 aa).

A signal peptide spans 1–12; it reads MCFFLGSRLAYA. Residues 1465–1758 form the Autotransporter domain; it reads ENLYNNGMWI…SFILGGNYYF (294 aa).

It localises to the cell outer membrane. This is an uncharacterized protein from Escherichia coli (strain K12).